The following is a 727-amino-acid chain: Elongation factor 2 (727 aa).

Residues 19-260 enclose the tr-type G domain; sequence DQIRNMGICA…MAITHLPNPL (242 aa). Residues 28–35, 94–98, and 148–151 contribute to the GTP site; these read AHIDHGKT, DTPGH, and NKVD. Diphthamide is present on His603.

It belongs to the TRAFAC class translation factor GTPase superfamily. Classic translation factor GTPase family. EF-G/EF-2 subfamily.

It is found in the cytoplasm. Functionally, catalyzes the GTP-dependent ribosomal translocation step during translation elongation. During this step, the ribosome changes from the pre-translocational (PRE) to the post-translocational (POST) state as the newly formed A-site-bound peptidyl-tRNA and P-site-bound deacylated tRNA move to the P and E sites, respectively. Catalyzes the coordinated movement of the two tRNA molecules, the mRNA and conformational changes in the ribosome. This is Elongation factor 2 from Methanococcus maripaludis (strain C6 / ATCC BAA-1332).